We begin with the raw amino-acid sequence, 756 residues long: MNIEELPLPSLLRDFLISKRGIRTLYPPQEEAIRAGLLNGENILMVSATASGKTLLAEVAAVNNVLVNDKKSLVAVPLKALAFEKLNDFNTYSELGIRVAASTGDYNSEDKWLGSYDVIITTYEKLDSLLRLKPSWIWNVGQLIIDEIHFINDDERGPIIESIVAKLRMLNLNPQIIGLSATIGNPEELANWLNAKLVKSDWRPVSLREGVYHKGVVTYVNDGEKRISGQGDSLINLTVDTLNDGGQVLVFSSSRQGAVRIARKLAEYICSSPVRYIDPGEAGKLAEEVRETSSSRILAEELTGLIKCGVSFHHAGLELEVRRVIEEGFRRGVLRVLASTTTLAAGVNLPARRVIVNEYRRYEPGYGFIEIPVMEYKQMAGRAGRPGLDPYGEAIIIVSSKDEVDYVIDKYIKSPPEYVKSNFMNPTSLKFHTLSAVASQYAETIDELVKFTSNTFAGFQGKLSAMIQANSVRRMISRIIDELVDYGFIIRNGDKLEATEVGAVVNRMYLDPDTAHVFIMGLRNLNSDADLNAYSLMLVVKSPKIPKVKVRRNELDELAQQAASMWSSIPLKPSDVDELVNYPEDYEDFLSEFKTAMALLEWINESNEDQIMKTYDVQPGDLRVLSDQAEWLIGALQELARTLGLSGNVVNGLRALRYRVKYGVNDELLELVVNLEGVGRVRARALYAAGYRSIEDLAKANVSDLTRIRGIGDKIAGSIIEQAHQLVKDGRVIKFNESTVKGKTRRGGGGLLDHMY.

Residues Gln29 and 47-54 (SATASGKT) each bind ATP. The Helicase ATP-binding domain maps to 34–201 (RAGLLNGENI…WLNAKLVKSD (168 aa)). Residues 146-149 (DEIH) carry the DEAH box motif. A Helicase C-terminal domain is found at 233-435 (SLINLTVDTL…PTSLKFHTLS (203 aa)).

It belongs to the helicase family. Hel308 subfamily. As to quaternary structure, monomer.

The catalysed reaction is Couples ATP hydrolysis with the unwinding of duplex DNA by translocating in the 3'-5' direction.. It catalyses the reaction ATP + H2O = ADP + phosphate + H(+). In terms of biological role, DNA-dependent ATPase and 3'-5' DNA helicase that may be involved in repair of stalled replication forks. The protein is ATP-dependent DNA helicase Hel308 of Caldivirga maquilingensis (strain ATCC 700844 / DSM 13496 / JCM 10307 / IC-167).